The following is a 183-amino-acid chain: QASIFSRFFRMFSFIFPFVNVIKLIIASVTSLVCLAFSCVALGGSAVALIVSTPLFIMFSPILVPATIATTLLASGLMAGTTLGLTGIGLIMGLVRTAGGVSLLQSPLRKIIVNRIKARLGGGGGGSRLARLKKILGLLNKLRGMGAGGAAAPAAEPAPAAEAAPAAEAAPAAAPAAAPAAAP.

Residues 1–23 form a polar region; sequence QASIFSRFFRMFSFIFPFVNVIK. 3 helical membrane-spanning segments follow: residues 24–44, 46–66, and 72–92; these read LIIASVTSLVCLAFSCVALGG, AVALIVSTPLFIMFSPILVPA, and LLASGLMAGTTLGLTGIGLIM. Residues 24-95 form a hydrophobic region; the sequence is LIIASVTSLV…TGIGLIMGLV (72 aa).

This sequence belongs to the oleosin family. In terms of tissue distribution, the full-length protein is found in the tapetal lipid bodies of immature anthers, the proteolytically cleaved C-terminal product is found on the coats of pollen grains. Not present in seeds.

The protein resides in the lipid droplet. Its subcellular location is the membrane. Functionally, many of the major pollen coat proteins are derived from endoproteolytic cleavage of oleosin-like proteins. The chain is Oleosin-B2 (OlnB2) from Brassica napus (Rape).